Reading from the N-terminus, the 185-residue chain is Peptide deformylase (185 aa).

Fe cation contacts are provided by cysteine 94 and histidine 136. The active site involves glutamate 137. Histidine 140 lines the Fe cation pocket.

It belongs to the polypeptide deformylase family. Fe(2+) is required as a cofactor.

It carries out the reaction N-terminal N-formyl-L-methionyl-[peptide] + H2O = N-terminal L-methionyl-[peptide] + formate. Functionally, removes the formyl group from the N-terminal Met of newly synthesized proteins. Requires at least a dipeptide for an efficient rate of reaction. N-terminal L-methionine is a prerequisite for activity but the enzyme has broad specificity at other positions. This Chlorobium limicola (strain DSM 245 / NBRC 103803 / 6330) protein is Peptide deformylase.